A 174-amino-acid polypeptide reads, in one-letter code: Shikimate kinase 2 (174 aa).

An ATP-binding site is contributed by glycine 12–threonine 17. Mg(2+)-binding residues include threonine 16 and aspartate 32. The substrate site is built by aspartate 34, arginine 58, and glycine 79. The LID domain stretch occupies residues alanine 112 to lysine 126. Arginine 120 lines the ATP pocket. Position 139 (arginine 139) interacts with substrate. Glutamine 155 lines the ATP pocket.

This sequence belongs to the shikimate kinase family. AroL subfamily. As to quaternary structure, monomer. It depends on Mg(2+) as a cofactor.

It localises to the cytoplasm. It catalyses the reaction shikimate + ATP = 3-phosphoshikimate + ADP + H(+). Its pathway is metabolic intermediate biosynthesis; chorismate biosynthesis; chorismate from D-erythrose 4-phosphate and phosphoenolpyruvate: step 5/7. Functionally, catalyzes the specific phosphorylation of the 3-hydroxyl group of shikimic acid using ATP as a cosubstrate. This Yersinia pseudotuberculosis serotype IB (strain PB1/+) protein is Shikimate kinase 2.